An 87-amino-acid chain; its full sequence is Beta-toxin Ct1a (87 aa).

A signal peptide spans Met1–Ala19. One can recognise an LCN-type CS-alpha/beta domain in the interval Lys20–Asn85. 4 disulfide bridges follow: Cys31/Cys84, Cys35/Cys60, Cys44/Cys65, and Cys48/Cys67. Asparagine amide is present on Asn85.

The protein belongs to the long (4 C-C) scorpion toxin superfamily. Sodium channel inhibitor family. Beta subfamily. Expressed by the venom gland.

The protein localises to the secreted. Its function is as follows. Beta toxins bind voltage-independently at site-4 of sodium channels (Nav) and shift the voltage of activation toward more negative potentials thereby affecting sodium channel activation and promoting spontaneous and repetitive firing. Is lethal to mice but does not show toxicity to freshwater shrimp and crickets. This is Beta-toxin Ct1a from Centruroides tecomanus (Scorpion).